Here is an 828-residue protein sequence, read N- to C-terminus: DNA topoisomerase 3 (828 aa).

The Toprim domain maps to 4–149 (RILNVAEKPS…KFEFYRAHFS (146 aa)). One can recognise a Topo IA-type catalytic domain in the interval 167-617 (NEKDSIAVDT…STIEKYKQLY (451 aa)). Catalysis depends on Tyr361, which acts as the O-(5'-phospho-DNA)-tyrosine intermediate. The disordered stretch occupies residues 763–828 (QQQQQQQQQQ…SDRNNNNFIF (66 aa)).

Belongs to the type IA topoisomerase family.

It catalyses the reaction ATP-independent breakage of single-stranded DNA, followed by passage and rejoining.. Functionally, releases the supercoiling and torsional tension of DNA introduced during the DNA replication and transcription by transiently cleaving and rejoining one strand of the DNA duplex. Introduces a single-strand break via transesterification at a target site in duplex DNA. The scissile phosphodiester is attacked by the catalytic tyrosine of the enzyme, resulting in the formation of a DNA-(5'-phosphotyrosyl)-enzyme intermediate and the expulsion of a 3'-OH DNA strand. The free DNA strand than undergoes passage around the unbroken strand thus removing DNA supercoils. Finally, in the religation step, the DNA 3'-OH attacks the covalent intermediate to expel the active-site tyrosine and restore the DNA phosphodiester backbone. This chain is DNA topoisomerase 3 (top3), found in Dictyostelium discoideum (Social amoeba).